The primary structure comprises 515 residues: MSREKYYITTAIAYPNGKPHIGHAYELIATDAMARFQRLNGMDVYFLTGTDEHGIKMLQSARKEGITPRELADRNTSAFRRMAEVLNSSNDDYIRTSEERHYKASQAIWQAMVANGDIYKGGYAGWYSVRDEAYYGEEETEVRADGVRYGPQGTPVEWVEEESYFFRLSAYQDKLLDLYENNPGFIMPAERRNEIVSFVKSGLKDLSISRTTFDWGIPVPGDEKHVMYVWVDALTNYITALGYPDTTDERWAYWPANAHIIGKDISRFHAVYWPAFLMSAQLPLPKRVFAHGFLFNRGEKMSKSVGNVIDPFELVERYGLDQLRYFLMREVPFGQDGSYSHEAIVNRTNADLANDLGNLAQRSLSMIAKNCEGKVPQPGAFSEADKAILDQADAALETARKAMDDQALHLALGAIFAVVAEANRYFAGQEPWALRKTDPARMGTVLYVTAEVLRRVGIMVQPFIPQSAEKLLDILAVPADKRQFADVLASPLAGGTDLPAPQPVFPRYVEADEQN.

A 'HIGH' region motif is present at residues 13-23 (AYPNGKPHIGH). Positions 300–304 (KMSKS) match the 'KMSKS' region motif. Position 303 (Lys303) interacts with ATP.

It belongs to the class-I aminoacyl-tRNA synthetase family. MetG type 2B subfamily. In terms of assembly, monomer.

It is found in the cytoplasm. It carries out the reaction tRNA(Met) + L-methionine + ATP = L-methionyl-tRNA(Met) + AMP + diphosphate. Functionally, is required not only for elongation of protein synthesis but also for the initiation of all mRNA translation through initiator tRNA(fMet) aminoacylation. This is Methionine--tRNA ligase from Brucella suis biovar 1 (strain 1330).